The sequence spans 226 residues: ATP-dependent dethiobiotin synthetase BioD (226 aa).

ATP is bound at residue 12-17; the sequence is GVGKTV. Residue threonine 16 participates in Mg(2+) binding. Residue lysine 37 is part of the active site. Threonine 41 contacts substrate. ATP is bound by residues aspartate 49, 108 to 111, and 197 to 199; these read EGAG and PAG. Residues aspartate 49 and glutamate 108 each coordinate Mg(2+).

It belongs to the dethiobiotin synthetase family. As to quaternary structure, homodimer. The cofactor is Mg(2+).

The protein localises to the cytoplasm. It carries out the reaction (7R,8S)-7,8-diammoniononanoate + CO2 + ATP = (4R,5S)-dethiobiotin + ADP + phosphate + 3 H(+). Its pathway is cofactor biosynthesis; biotin biosynthesis; biotin from 7,8-diaminononanoate: step 1/2. Catalyzes a mechanistically unusual reaction, the ATP-dependent insertion of CO2 between the N7 and N8 nitrogen atoms of 7,8-diaminopelargonic acid (DAPA, also called 7,8-diammoniononanoate) to form a ureido ring. The sequence is that of ATP-dependent dethiobiotin synthetase BioD from Mycobacterium avium (strain 104).